The following is an 888-amino-acid chain: Bifunctional uridylyltransferase/uridylyl-removing enzyme (888 aa).

Positions 1–338 (MIITSPLLDY…LPNYERKIEE (338 aa)) are uridylyltransferase. A disordered region spans residues 182 to 204 (EQAKRHAQHNNTESNLEPDIKNA). A uridylyl-removing region spans residues 339–699 (INENFKLVDG…AHRQSAQDAV (361 aa)). Positions 457–579 (VDAHTLLLIR…LGDMEHLDYL (123 aa)) constitute an HD domain. ACT domains are found at residues 700–781 (QIFI…GLMQ) and 809–887 (MVEI…IVSQ).

The protein belongs to the GlnD family. Requires Mg(2+) as cofactor.

It catalyses the reaction [protein-PII]-L-tyrosine + UTP = [protein-PII]-uridylyl-L-tyrosine + diphosphate. It carries out the reaction [protein-PII]-uridylyl-L-tyrosine + H2O = [protein-PII]-L-tyrosine + UMP + H(+). Its activity is regulated as follows. Uridylyltransferase (UTase) activity is inhibited by glutamine, while glutamine activates uridylyl-removing (UR) activity. Its function is as follows. Modifies, by uridylylation and deuridylylation, the PII regulatory proteins (GlnB and homologs), in response to the nitrogen status of the cell that GlnD senses through the glutamine level. Under low glutamine levels, catalyzes the conversion of the PII proteins and UTP to PII-UMP and PPi, while under higher glutamine levels, GlnD hydrolyzes PII-UMP to PII and UMP (deuridylylation). Thus, controls uridylylation state and activity of the PII proteins, and plays an important role in the regulation of nitrogen assimilation and metabolism. The polypeptide is Bifunctional uridylyltransferase/uridylyl-removing enzyme (Acinetobacter baylyi (strain ATCC 33305 / BD413 / ADP1)).